The sequence spans 361 residues: MSTYTIPVGPLHVALEEPMYFRIEVDGEKVVSVDITAGHVHRGIEYLATKRNIYQNIVLTERVCSLCSNSHPQTYCMALESITGMVVPPRAQYLRVIADETKRVASHMFNVAILAHIVGFDSLFMHVMEAREIMQDTKEAVFGNRMDIAAMAIGGVKYDLDKDGRDYFIGQLDKLEPTLRDEIIPLYQTNPSIVDRTRGIGVLSAADCVDYGLMGPVARGSGHAYDVRKQAPYAVYDRLDFEMALGEHGDVWSRAMVRWQEALTSIGLIRQCLRDMPDGPTKAGPVPPIPAGEAVAKTEAPRGELIYYLKTNGTDRPERLKWRVPTYMNWDALNVMMAGARISDIPLIVNSIDPCISCTER.

Ni(2+) contacts are provided by Cys64, Cys67, Cys355, and Cys358.

This sequence to E.coli formate hydrogenlyase hydrogenase isozyme 3 and to bovine mitochondrial NADH-ubiquinone oxidoreductase. Requires Ni(2+) as cofactor.

Its function is as follows. The carbon monoxide dehydrogenase (CODH) oxidizes carbon monoxide coupled, via CooF, to the reduction of a hydrogen cation by a hydrogenase (probably CooH). This Rhodospirillum rubrum protein is Carbon monoxide-induced hydrogenase (cooH).